Here is a 738-residue protein sequence, read N- to C-terminus: Photosystem I P700 chlorophyll a apoprotein A2 (738 aa).

The next 8 helical transmembrane spans lie at 46–69, 135–158, 175–199, 273–291, 333–356, 372–398, 420–442, and 521–539; these read LFST…FHIA, LYQG…LHLQ, LNHH…HVAI, IAHH…GHMY, LHFQ…QHMY, AALY…IFFI, AIIS…LYVH, and FLVH…LILV. Residues Cys-563 and Cys-572 each contribute to the [4Fe-4S] cluster site. Helical transmembrane passes span 579 to 600 and 647 to 669; these read AFYL…YWHW and LAVW…MFLI. Positions 658, 666, and 674 each coordinate chlorophyll a. Trp-675 is a binding site for phylloquinone. The helical transmembrane segment at 711–731 threads the bilayer; sequence VVGLAHFTVGYVLTYGAFLIA.

This sequence belongs to the PsaA/PsaB family. In terms of assembly, the PsaA/B heterodimer binds the P700 chlorophyll special pair and subsequent electron acceptors. PSI consists of a core antenna complex that captures photons, and an electron transfer chain that converts photonic excitation into a charge separation. The cyanobacterial PSI reaction center is composed of one copy each of PsaA,B,C,D,E,F,I,J,K,L,M and X, and forms trimeric complexes. The cofactor is PSI electron transfer chain: 5 chlorophyll a, 1 chlorophyll a', 2 phylloquinones and 3 4Fe-4S clusters. PSI core antenna: 90 chlorophyll a, 22 carotenoids, 3 phospholipids and 1 galactolipid. P700 is a chlorophyll a/chlorophyll a' dimer, A0 is one or more chlorophyll a, A1 is one or both phylloquinones and FX is a shared 4Fe-4S iron-sulfur center..

It localises to the cellular thylakoid membrane. It catalyses the reaction reduced [plastocyanin] + hnu + oxidized [2Fe-2S]-[ferredoxin] = oxidized [plastocyanin] + reduced [2Fe-2S]-[ferredoxin]. Functionally, psaA and PsaB bind P700, the primary electron donor of photosystem I (PSI), as well as the electron acceptors A0, A1 and FX. PSI is a plastocyanin/cytochrome c6-ferredoxin oxidoreductase, converting photonic excitation into a charge separation, which transfers an electron from the donor P700 chlorophyll pair to the spectroscopically characterized acceptors A0, A1, FX, FA and FB in turn. Oxidized P700 is reduced on the lumenal side of the thylakoid membrane by plastocyanin or cytochrome c6. The polypeptide is Photosystem I P700 chlorophyll a apoprotein A2 (Synechococcus sp. (strain CC9311)).